We begin with the raw amino-acid sequence, 75 residues long: Microcin H47 (75 aa).

A propeptide spanning residues 1 to 15 (MREITESQLRYISGA) is cleaved from the precursor. Residues 30–50 (AIVGALAGIPGGPLGVVVGAV) form a helical membrane-spanning segment.

It localises to the secreted. The protein localises to the host cell membrane. Its function is as follows. Bactericidal antibiotic. Active on bacteria phylogenetically related to the producing strain. This is Microcin H47 (mchB) from Escherichia coli O6:H1 (strain CFT073 / ATCC 700928 / UPEC).